The following is a 238-amino-acid chain: Leucine-rich repeat-containing protein 57 (238 aa).

LRR repeat units follow at residues 10–36 (LETSQKTGVFQLTGKGLTEFPEDLQKL), 37–62 (TANLRTVDLSNNKIEELPAFIGSFQH), 64–82 (KSFTISCNKLTSLPNDIGK), 83–106 (LKKLETLILNGNQLKQLPSSIGQL), 108–128 (SLRTLSLSGNQFKEFPSGLGT), 129–152 (LRQLDVLDLSKNQIRVVPAEVAEL), 154–173 (AIEINLNQNQISSVTQEVSR), and 174–199 (TPRLKVLRLEENCLELSSIPLSILTD).

The chain is Leucine-rich repeat-containing protein 57 (lrrc57) from Danio rerio (Zebrafish).